The chain runs to 342 residues: Erlin-1 (342 aa).

Topologically, residues 1–6 are cytoplasmic; it reads MAHVGA. A helical membrane pass occupies residues 7–23; the sequence is VVAAMAGLMAILLHSSI. At 24–342 the chain is on the lumenal side; sequence HKIEEGHLAV…ASKPKASEGH (319 aa). Asn106 carries N-linked (GlcNAc...) asparagine glycosylation. The segment at 308–342 is disordered; the sequence is SSASRPAAGESEQLESLSMRESLKKASKPKASEGH.

Belongs to the band 7/mec-2 family.

Its subcellular location is the endoplasmic reticulum membrane. In terms of biological role, mediates the endoplasmic reticulum-associated degradation (ERAD) of inositol 1,4,5-trisphosphate receptors (IP3Rs). Involved in regulation of cellular cholesterol homeostasis by regulation the SREBP signaling pathway. Binds cholesterol and may promote ER retention of the SCAP-SREBF complex. The chain is Erlin-1 from Danio rerio (Zebrafish).